The sequence spans 493 residues: Rop guanine nucleotide exchange factor 10 (493 aa).

2 disordered regions span residues 1–45 (MFDG…RSDM) and 400–423 (GEAE…VVAA). Residues 17 to 27 (DGMHTPEHELA) show a composition bias toward basic and acidic residues. Residues 35–401 (RRGKQNRRSD…RLVQRQLMGE (367 aa)) form the PRONE domain.

Functionally, guanine-nucleotide exchange factor (GEF) that acts as an activator of Rop (Rho of plants) GTPases by promoting the exchange of GDP for GTP. In Arabidopsis thaliana (Mouse-ear cress), this protein is Rop guanine nucleotide exchange factor 10 (ROPGEF10).